The following is a 245-amino-acid chain: DNA repair protein RecO (245 aa).

The protein belongs to the RecO family.

In terms of biological role, involved in DNA repair and RecF pathway recombination. The protein is DNA repair protein RecO of Klebsiella pneumoniae subsp. pneumoniae (strain ATCC 700721 / MGH 78578).